Reading from the N-terminus, the 266-residue chain is MAVITMIEAQKRSGRYNVYLDGAYAFPVSESVLVDFRLAKGMEVDKALTAQLIDADNVAKAYNRALDYLSQQLRTEKEVRDKLADLEIPAETIAATLQRLRSLALVDDAHYAASYVRTMMHTGDKGPRVIRQNLRHKGVLEQPIDEALTLYTTEEQLTVGTAVAAKLAKRYQRQPFGTQQQKIRQGLLTRGFDNDLATKMLATLDLTPDEDEQWALLVKQGEKLWHRYRTLSMRERQYKTKQALYRKGFNLDDISRWLADLGESAQ.

Belongs to the RecX family.

The protein resides in the cytoplasm. Its function is as follows. Modulates RecA activity. The sequence is that of Regulatory protein RecX from Levilactobacillus brevis (strain ATCC 367 / BCRC 12310 / CIP 105137 / JCM 1170 / LMG 11437 / NCIMB 947 / NCTC 947) (Lactobacillus brevis).